Here is a 240-residue protein sequence, read N- to C-terminus: Enoyl-CoA delta isomerase 1, peroxisomal (240 aa).

The Microbody targeting signal signature appears at 238–240; it reads SKL.

This sequence belongs to the enoyl-CoA hydratase/isomerase family.

Its subcellular location is the peroxisome. The catalysed reaction is a (3Z)-enoyl-CoA = a 4-saturated (2E)-enoyl-CoA. It carries out the reaction a (3E)-enoyl-CoA = a 4-saturated (2E)-enoyl-CoA. It participates in lipid metabolism; fatty acid beta-oxidation. Functionally, able to isomerize both 3-cis and 3-trans double bonds into the 2-trans form in a range of enoyl-CoA species. Essential for the beta oxidation of unsaturated fatty acids. The polypeptide is Enoyl-CoA delta isomerase 1, peroxisomal (Arabidopsis thaliana (Mouse-ear cress)).